The following is a 442-amino-acid chain: Divalent metal cation transporter MntH (442 aa).

11 helical membrane passes run 29–49 (MLAYAGPGYLVSVGYIDPGNW), 62–82 (TLLTVILLSNLMAILLQSLCV), 106–126 (FCLWVLCEIAIAACDLAELLG), 135–155 (FVIPLIWGVCITALDVLVLLF), 166–186 (ALVIMLVATVGICFTAEILFS), 209–229 (MLYIAIGILGATVMPHNLYLH), 258–278 (FALSLALFINSAILIVSAATF), 295–315 (LLSPLLGVSAASAIFGIALLA), 347–367 (LITRLLAIIPALITIILFGEN), 372–392 (LIVLSQVILSLQLPFAVIPLV), and 413–433 (LAWLVAIVIVGLNAWLLLQSL).

This sequence belongs to the NRAMP family.

It localises to the cell inner membrane. Functionally, h(+)-stimulated, divalent metal cation uptake system. This chain is Divalent metal cation transporter MntH, found in Nostoc sp. (strain PCC 7120 / SAG 25.82 / UTEX 2576).